The sequence spans 213 residues: ATP synthase peripheral stalk subunit OSCP, mitochondrial (213 aa).

The transit peptide at Met-1–Pro-23 directs the protein to the mitochondrion. Positions Ala-5–Pro-23 match the SIFI-degron motif. An N6-acetyllysine mark is found at Lys-54, Lys-60, Lys-70, and Lys-73. Lys-90 bears the N6-succinyllysine mark. Lys-158 and Lys-162 each carry N6-acetyllysine; alternate. An N6-succinyllysine; alternate mark is found at Lys-158 and Lys-162. An N6-acetyllysine mark is found at Lys-172, Lys-176, and Lys-192. Lys-199 bears the N6-succinyllysine mark.

This sequence belongs to the ATPase delta chain family. Component of the ATP synthase complex composed at least of ATP5F1A/subunit alpha, ATP5F1B/subunit beta, ATP5MC1/subunit c (homooctomer), MT-ATP6/subunit a, MT-ATP8/subunit 8, ATP5ME/subunit e, ATP5MF/subunit f, ATP5MG/subunit g, ATP5MK/subunit k, ATP5MJ/subunit j, ATP5F1C/subunit gamma, ATP5F1D/subunit delta, ATP5F1E/subunit epsilon, ATP5PF/subunit F6, ATP5PB/subunit b, ATP5PD/subunit d, ATP5PO/subunit OSCP. ATP synthase complex consists of a soluble F(1) head domain (subunits alpha(3) and beta(3)) - the catalytic core - and a membrane F(0) domain - the membrane proton channel (subunits c, a, 8, e, f, g, k and j). These two domains are linked by a central stalk (subunits gamma, delta, and epsilon) rotating inside the F1 region and a stationary peripheral stalk (subunits F6, b, d, and OSCP). In terms of processing, acetylation at Lys-162 decreases ATP production. Deacetylated by SIRT3. In response to mitochondrial stress, the precursor protein is ubiquitinated by the SIFI complex in the cytoplasm before mitochondrial import, leading to its degradation. Within the SIFI complex, UBR4 initiates ubiquitin chain that are further elongated or branched by KCMF1.

The protein localises to the mitochondrion. It is found in the mitochondrion inner membrane. Functionally, subunit OSCP, of the mitochondrial membrane ATP synthase complex (F(1)F(0) ATP synthase or Complex V) that produces ATP from ADP in the presence of a proton gradient across the membrane which is generated by electron transport complexes of the respiratory chain. ATP synthase complex consist of a soluble F(1) head domain - the catalytic core - and a membrane F(1) domain - the membrane proton channel. These two domains are linked by a central stalk rotating inside the F(1) region and a stationary peripheral stalk. During catalysis, ATP synthesis in the catalytic domain of F(1) is coupled via a rotary mechanism of the central stalk subunits to proton translocation. In vivo, can only synthesize ATP although its ATP hydrolase activity can be activated artificially in vitro. Part of the complex F(0) domain. Part of the complex F(0) domain and the peripheric stalk, which acts as a stator to hold the catalytic alpha(3)beta(3) subcomplex and subunit a/ATP6 static relative to the rotary elements. The sequence is that of ATP synthase peripheral stalk subunit OSCP, mitochondrial from Pongo abelii (Sumatran orangutan).